A 345-amino-acid chain; its full sequence is N-acetyl-gamma-glutamyl-phosphate reductase (345 aa).

The active site involves cysteine 149.

It belongs to the NAGSA dehydrogenase family. Type 1 subfamily.

It localises to the cytoplasm. It carries out the reaction N-acetyl-L-glutamate 5-semialdehyde + phosphate + NADP(+) = N-acetyl-L-glutamyl 5-phosphate + NADPH + H(+). It participates in amino-acid biosynthesis; L-arginine biosynthesis; N(2)-acetyl-L-ornithine from L-glutamate: step 3/4. Catalyzes the NADPH-dependent reduction of N-acetyl-5-glutamyl phosphate to yield N-acetyl-L-glutamate 5-semialdehyde. The chain is N-acetyl-gamma-glutamyl-phosphate reductase from Geobacillus stearothermophilus (Bacillus stearothermophilus).